Here is a 541-residue protein sequence, read N- to C-terminus: Developmental and secondary metabolism regulator VEL1 (541 aa).

The Velvet domain maps to 26-220; it reads NRHLWYQLTV…ADQGCRVRIR (195 aa). The short motif at 40-45 is the Nuclear localization signal element; sequence ERARAC. 2 disordered regions span residues 222–447 and 464–483; these read DVRM…MPTQ and PIEA…TGGK. A compositionally biased stretch (basic and acidic residues) spans 230–244; that stretch reads GKGSGYDRREEEYAR. Residues 289–298 show a composition bias toward low complexity; it reads APSLPHAPSL. 3 stretches are compositionally biased toward pro residues: residues 299–314, 345–355, and 425–439; these read PHAP…PPAA, APIPPVTPTGP, and SPAP…PAPS. The tract at residues 444–472 is PEST; sequence MPTQSSLAPLKIASLVSPLPPIEAQTEPL.

Belongs to the velvet family. VeA subfamily. Component of the heterotrimeric velvet complex composed of LAE1, VEL1 and VEL2; VEL1 acting as a bridging protein between LAE1 and VEL2.

The protein localises to the nucleus. It is found in the cytoplasm. Its function is as follows. Component of the velvet transcription factor complex that controls sexual/asexual developmental ratio in response to light, promoting sexual development in the darkness while stimulating asexual sporulation under illumination. The velvet complex acts as a global regulator for secondary metabolite gene expression. Controls the expression of the gliotoxin gene cluster. Plays a key role in mycoparasitism. The polypeptide is Developmental and secondary metabolism regulator VEL1 (Hypocrea virens (strain Gv29-8 / FGSC 10586) (Gliocladium virens)).